The following is a 237-amino-acid chain: Pyridoxal 5'-phosphate synthase subunit PdxS (237 aa).

Catalysis depends on Lys-19, which acts as the Schiff-base intermediate with D-ribose 5-phosphate. Gly-91 serves as a coordination point for D-ribose 5-phosphate. Arg-103 is a binding site for D-glyceraldehyde 3-phosphate. D-ribose 5-phosphate is bound by residues Gly-157 and Gly-178–Ser-179.

It belongs to the PdxS/SNZ family. In the presence of PdxT, forms a dodecamer of heterodimers.

The catalysed reaction is aldehydo-D-ribose 5-phosphate + D-glyceraldehyde 3-phosphate + L-glutamine = pyridoxal 5'-phosphate + L-glutamate + phosphate + 3 H2O + H(+). It functions in the pathway cofactor biosynthesis; pyridoxal 5'-phosphate biosynthesis. Catalyzes the formation of pyridoxal 5'-phosphate from ribose 5-phosphate (RBP), glyceraldehyde 3-phosphate (G3P) and ammonia. The ammonia is provided by the PdxT subunit. Can also use ribulose 5-phosphate and dihydroxyacetone phosphate as substrates, resulting from enzyme-catalyzed isomerization of RBP and G3P, respectively. This is Pyridoxal 5'-phosphate synthase subunit PdxS from Methanococcus vannielii.